The sequence spans 249 residues: Proteasome subunit alpha type-4 (249 aa).

Belongs to the peptidase T1A family. The 26S proteasome consists of a 20S proteasome core and two 19S regulatory subunits. The 20S proteasome core is composed of 28 subunits that are arranged in four stacked rings, resulting in a barrel-shaped structure. The two end rings are each formed by seven alpha subunits, and the two central rings are each formed by seven beta subunits. The catalytic chamber with the active sites is on the inside of the barrel.

The protein localises to the cytoplasm. It localises to the nucleus. Functionally, the proteasome is a multicatalytic proteinase complex which is characterized by its ability to cleave peptides with Arg, Phe, Tyr, Leu, and Glu adjacent to the leaving group at neutral or slightly basic pH. The proteasome has an ATP-dependent proteolytic activity. This chain is Proteasome subunit alpha type-4 (PAC1), found in Petunia hybrida (Petunia).